Reading from the N-terminus, the 560-residue chain is DNA ligase B (560 aa).

The N6-AMP-lysine intermediate role is filled by Lys-124.

Belongs to the NAD-dependent DNA ligase family. LigB subfamily.

It catalyses the reaction NAD(+) + (deoxyribonucleotide)n-3'-hydroxyl + 5'-phospho-(deoxyribonucleotide)m = (deoxyribonucleotide)n+m + AMP + beta-nicotinamide D-nucleotide.. In terms of biological role, catalyzes the formation of phosphodiester linkages between 5'-phosphoryl and 3'-hydroxyl groups in double-stranded DNA using NAD as a coenzyme and as the energy source for the reaction. This Escherichia coli (strain K12 / DH10B) protein is DNA ligase B.